The primary structure comprises 450 residues: Na(+)/H(+) antiporter NhaA (450 aa).

11 consecutive transmembrane segments (helical) span residues 24–44 (FFAI…LALV), 75–95 (LILW…GLEI), 111–131 (ALPI…YLAL), 140–160 (GWGV…SLLG), 169–189 (VFLT…IAFF), 196–216 (FSFL…NWLG), 224–244 (LLVG…ATIA), 318–338 (WVAW…TVSA), 352–372 (IFFG…WLLV), 390–410 (GIGW…TLAF), and 422–442 (SILC…RVLL).

The protein belongs to the NhaA Na(+)/H(+) (TC 2.A.33) antiporter family.

It localises to the cell inner membrane. The catalysed reaction is Na(+)(in) + 2 H(+)(out) = Na(+)(out) + 2 H(+)(in). In terms of biological role, na(+)/H(+) antiporter that extrudes sodium in exchange for external protons. The polypeptide is Na(+)/H(+) antiporter NhaA (Oleidesulfovibrio alaskensis (strain ATCC BAA-1058 / DSM 17464 / G20) (Desulfovibrio alaskensis)).